The chain runs to 84 residues: Defensin-like protein 116 (84 aa).

Positions 1 to 24 are cleaved as a signal peptide; the sequence is MAITKNMLVVLLLTIIFVTSSVHC. Intrachain disulfides connect cysteine 40/cysteine 80, cysteine 46/cysteine 71, cysteine 55/cysteine 78, and cysteine 59/cysteine 79.

The protein belongs to the DEFL family.

Its subcellular location is the secreted. This chain is Defensin-like protein 116, found in Arabidopsis thaliana (Mouse-ear cress).